The sequence spans 426 residues: Histidine--tRNA ligase (426 aa).

Belongs to the class-II aminoacyl-tRNA synthetase family.

It localises to the cytoplasm. It carries out the reaction tRNA(His) + L-histidine + ATP = L-histidyl-tRNA(His) + AMP + diphosphate + H(+). This chain is Histidine--tRNA ligase, found in Saccharolobus islandicus (strain Y.G.57.14 / Yellowstone #1) (Sulfolobus islandicus).